The sequence spans 361 residues: Ribosomal RNA large subunit methyltransferase M (361 aa).

S-adenosyl-L-methionine contacts are provided by residues S187, 220–223 (CPGG), D239, D259, and D276. The active-site Proton acceptor is the K305.

This sequence belongs to the class I-like SAM-binding methyltransferase superfamily. RNA methyltransferase RlmE family. RlmM subfamily. As to quaternary structure, monomer.

The protein resides in the cytoplasm. It carries out the reaction cytidine(2498) in 23S rRNA + S-adenosyl-L-methionine = 2'-O-methylcytidine(2498) in 23S rRNA + S-adenosyl-L-homocysteine + H(+). Catalyzes the 2'-O-methylation at nucleotide C2498 in 23S rRNA. The polypeptide is Ribosomal RNA large subunit methyltransferase M (Shewanella baltica (strain OS185)).